A 390-amino-acid chain; its full sequence is MTTSLAAIAPHGGQLINRLAPEAERQEFLAIADKLPRVQLDERATSDLVMIAIGGFSPLKGFMEQDDYELVVEEMKLSNGLPWSVPVTLSVTEEVAAPLEVGSWVRLDNSAGKFIGVLELTQKYHYNKAHEAKNVYRTDDQAHPGVKVIYDQGPVNLAGPIWLLEREPHPLFPKYQIDPAASRQLFAERGWKTIVGFQTRNPIHRAHEYIQKCALEVVDGLFLHPLVGATKSDDIPADVRMRCYEIMVDNYFPKERVILGINPSAMRYAGPREAIFHALIRKNYGCTHFIVGRDHAGVGDYYGTYDAQEIFDEFAPEALGIVPMKFEHAFYCKKTLQMATTKTSPSGPEDRIHLSGTKVRALLRDGQLPPPEFSRPEVAQELIRAMQGES.

Belongs to the sulfate adenylyltransferase family.

The enzyme catalyses sulfate + ATP + H(+) = adenosine 5'-phosphosulfate + diphosphate. The protein operates within sulfur metabolism; hydrogen sulfide biosynthesis; sulfite from sulfate: step 1/3. The sequence is that of Sulfate adenylyltransferase (sat) from Synechocystis sp. (strain ATCC 27184 / PCC 6803 / Kazusa).